A 447-amino-acid chain; its full sequence is Elongation factor 1-alpha (447 aa).

The tr-type G domain maps to 5 to 230; sequence KIHISIVVIG…DQISEPKRPS (226 aa). A G1 region spans residues 14-21; the sequence is GHVDSGKS. 14 to 21 is a GTP binding site; the sequence is GHVDSGKS. At Lys-55 the chain carries N6,N6-dimethyllysine. Positions 70-74 are G2; sequence GITID. Lys-79 is subject to N6,N6,N6-trimethyllysine. Positions 91 to 94 are G3; sequence DAPG. GTP-binding positions include 91–95 and 153–156; these read DAPGH and NKMD. A G4 region spans residues 153–156; that stretch reads NKMD. Lys-187 carries the post-translational modification N6,N6,N6-trimethyllysine. Residues 194–196 are G5; the sequence is SGF. At Lys-261 the chain carries N6-methyllysine. Glu-289 carries the post-translational modification 5-glutamyl glycerylphosphorylethanolamine. An N6,N6,N6-trimethyllysine modification is found at Lys-306. The residue at position 362 (Glu-362) is a 5-glutamyl glycerylphosphorylethanolamine. Position 396 is an N6,N6,N6-trimethyllysine (Lys-396).

This sequence belongs to the TRAFAC class translation factor GTPase superfamily. Classic translation factor GTPase family. EF-Tu/EF-1A subfamily.

It is found in the cytoplasm. This protein promotes the GTP-dependent binding of aminoacyl-tRNA to the A-site of ribosomes during protein biosynthesis. In Daucus carota (Wild carrot), this protein is Elongation factor 1-alpha.